Here is a 150-residue protein sequence, read N- to C-terminus: CASP-like protein 2 (150 aa).

Topologically, residues 1 to 17 (MKPEAGDGRSGWRWVAT) are cytoplasmic. A helical transmembrane segment spans residues 18–38 (FDLILRLAAIVATSTAVLAAM). The Extracellular segment spans residues 39–41 (GKT). Residues 42–62 (FVVVVNGVACFYLLMSLPVSI) traverse the membrane as a helical segment. Residues 63 to 82 (FNIMRPGACPANRAVLTALD) lie on the Cytoplasmic side of the membrane. A helical transmembrane segment spans residues 83–103 (MVTVALVTAGALVAGILYLVH). At 104–121 (KAGDTHADWFSIWSQLDS) the chain is on the extracellular side. Residues 122 to 142 (LSYLAVLALILHVLLSGSILY) traverse the membrane as a helical segment. Residues 143 to 150 (KQALNIMF) lie on the Cytoplasmic side of the membrane.

The protein belongs to the Casparian strip membrane proteins (CASP) family. As to quaternary structure, homodimer and heterodimers.

It is found in the cell membrane. This chain is CASP-like protein 2, found in Picea sitchensis (Sitka spruce).